Here is a 430-residue protein sequence, read N- to C-terminus: Adenylosuccinate synthetase (430 aa).

Residues 12-18 and 40-42 contribute to the GTP site; these read GDEGKGK and GHT. The Proton acceptor role is filled by D13. Mg(2+) is bound by residues D13 and G40. IMP-binding positions include 13 to 16, 38 to 41, T129, R143, Q224, T239, and R303; these read DEGK and NAGH. Catalysis depends on H41, which acts as the Proton donor. 299-305 contributes to the substrate binding site; it reads TVSNRER. GTP is bound by residues R305, 331-333, and 413-415; these read KLD and STG.

It belongs to the adenylosuccinate synthetase family. Homodimer. The cofactor is Mg(2+).

The protein localises to the cytoplasm. It catalyses the reaction IMP + L-aspartate + GTP = N(6)-(1,2-dicarboxyethyl)-AMP + GDP + phosphate + 2 H(+). It functions in the pathway purine metabolism; AMP biosynthesis via de novo pathway; AMP from IMP: step 1/2. Plays an important role in the de novo pathway of purine nucleotide biosynthesis. Catalyzes the first committed step in the biosynthesis of AMP from IMP. The protein is Adenylosuccinate synthetase of Ehrlichia ruminantium (strain Gardel).